The chain runs to 621 residues: Pentatricopeptide repeat-containing protein At1g12620 (621 aa).

PPR repeat units lie at residues 36–70 (GKVS…RPRP), 71–105 (RLID…GIAH), 106–140 (NLYT…GYEP), 141–175 (DTVT…GHKP), 176–210 (TLIT…GFQP), 211–245 (NEVT…KIKL), 246–280 (DAVK…GFKA), 281–315 (DIII…KITP), 316–350 (DVVA…GISP), 351–385 (DTVT…GCGP), 386–420 (NIRT…GVVA), 421–455 (DTVT…RVRP), 456–490 (DIVS…KMEL), 491–525 (DIGI…GVKP), 526–560 (DVKT…GHSP), and 561–595 (NGCT…GFSV).

Belongs to the PPR family. P subfamily.

This chain is Pentatricopeptide repeat-containing protein At1g12620, found in Arabidopsis thaliana (Mouse-ear cress).